Reading from the N-terminus, the 524-residue chain is uncharacterized protein (524 aa).

Residues 1 to 65 (MSDPFFTRPE…IDEENEDTYE (65 aa)) form a disordered region. Positions 21-32 (SKREKENQKLER) are enriched in basic and acidic residues. Residues 51 to 64 (GFEDEIDEENEDTY) are compositionally biased toward acidic residues. WD repeat units lie at residues 131–176 (IETA…DTEN), 206–245 (DHVK…PQHC), 248–287 (HHRD…YIET), 290–329 (GHQD…QLVF), 342–380 (YMEG…PLFT), 409–448 (PQPR…RSFE), and 457–503 (SVYG…PNSG).

It is found in the nucleus. This is an uncharacterized protein from Schizosaccharomyces pombe (strain 972 / ATCC 24843) (Fission yeast).